The primary structure comprises 122 residues: UPF0102 protein VIBHAR_00890 (122 aa).

Belongs to the UPF0102 family.

In Vibrio campbellii (strain ATCC BAA-1116), this protein is UPF0102 protein VIBHAR_00890.